Consider the following 1379-residue polypeptide: Hepatocyte growth factor receptor (1379 aa).

The first 24 residues, 1–24 (MKAPTVLAPGILVLLLSLVQRSHG), serve as a signal peptide directing secretion. Residues 25–931 (ECKEALVKSE…VIVQPDQNFA (907 aa)) are Extracellular-facing. Residues 27–514 (KEALVKSEMN…TGKKITKIPL (488 aa)) enclose the Sema domain. N45 is a glycosylation site (N-linked (GlcNAc...) asparagine). 4 disulfide bridges follow: C95/C101, C98/C160, C133/C141, and C171/C174. A glycan (N-linked (GlcNAc...) asparagine) is linked at N106. N-linked (GlcNAc...) asparagine glycosylation is found at N201 and N357. 2 cysteine pairs are disulfide-bonded: C297/C362 and C384/C396. Residues N398 and N404 are each glycosylated (N-linked (GlcNAc...) asparagine). 4 cysteine pairs are disulfide-bonded: C519–C537, C525–C560, C528–C544, and C540–C550. 3 IPT/TIG domains span residues 562 to 654 (PAVY…FSYV), 656 to 738 (PVIT…FSYR), and 741 to 835 (PVVY…LTYV). A glycan (O-linked (Man) threonine) is linked at T581. Residues N606 and N634 are each glycosylated (N-linked (GlcNAc...) asparagine). O-linked (Man) threonine glycosylation is found at T675 and T760. N-linked (GlcNAc...) asparagine glycans are attached at residues N784 and N878. Residues 932–954 (GLIIGAVSISVVVLLLSGLFLWM) form a helical membrane-spanning segment. The Cytoplasmic portion of the chain corresponds to 955-1379 (RKRKHKDLGS…QDNIDGEGNT (425 aa)). Phosphoserine is present on S964. T975 carries the phosphothreonine modification. Residues S988, S995, and S998 each carry the phosphoserine modification. A Phosphotyrosine modification is found at Y1001. In terms of domain architecture, Protein kinase spans 1076–1343 (VHFNEVIGRG…RISSIFSTFI (268 aa)). Residues 1082–1090 (IGRGHFGCV) and K1108 each bind ATP. The Proton acceptor role is filled by D1202. The segment at 1210-1379 (LDEKFTVKVA…QDNIDGEGNT (170 aa)) is interaction with RANBP9. Y1228 carries the post-translational modification Phosphotyrosine. 2 positions are modified to phosphotyrosine; by autocatalysis: Y1232 and Y1233. Residue T1287 is modified to Phosphothreonine. The tract at residues 1318-1357 (WHPKAEMRPSFSELVSRISSIFSTFIGEHYVHVNATYVNV) is interaction with MUC20. A phosphotyrosine; by autocatalysis mark is found at Y1347 and Y1354. Y1363 bears the Phosphotyrosine mark.

The protein belongs to the protein kinase superfamily. Tyr protein kinase family. In terms of assembly, heterodimer made of an alpha chain (50 kDa) and a beta chain (145 kDa) which are disulfide linked. Binds PLXNB1. Interacts when phosphorylated with downstream effectors including STAT3, PIK3R1, SRC, PCLG1, GRB2 and GAB1. When phosphorylated at Tyr-1354, interacts with INPPL1/SHIP2. Interacts with RANBP9 and RANBP10. Interacts with INPP5D/SHIP1. Interacts with SPSB1, SPSB2, SPSB4 and probably SPSB3. SPSB1 binding occurs in the presence and in the absence of HGF, however HGF treatment has a positive effect on this interaction. Interacts with MUC20; prevents interaction with GRB2 and suppresses hepatocyte growth factor-induced cell proliferation. Interacts with GRB10. Interacts with PTPN1 and PTPN2. Interacts with HSP90AA1 and HSP90AB1; the interaction suppresses MET kinase activity. Interacts with tensin TNS3. Interacts (when phosphorylated) with tensin TNS4 (via SH2 domain); the interaction increases MET protein stability by inhibiting MET endocytosis and subsequent lysosomal degradation. As to quaternary structure, (Microbial infection) Interacts with L.monocytogenes InlB. InlB probably dimerizes upon binding to MET, which encourages subsequent dimerization of MET. Autophosphorylated in response to ligand binding on Tyr-1232 and Tyr-1233 in the kinase domain leading to further phosphorylation of Tyr-1347 and Tyr-1354 in the C-terminal multifunctional docking site. Dephosphorylated by PTPRJ at Tyr-1347 and Tyr-1363. Dephosphorylated by PTPN1 and PTPN2. Post-translationally, ubiquitinated. Ubiquitination by CBL regulates MET endocytosis, resulting in decreasing plasma membrane receptor abundance, and in endosomal degradation and/or recycling of internalized receptors. In terms of processing, O-mannosylation of IPT/TIG domains by TMEM260 is required for protein maturation. O-mannosylated residues are composed of single mannose glycans that are not elongated or modified. (Microbial infection) Tyrosine phosphorylation is stimulated by L.monocytogenes InlB.

The protein resides in the membrane. It catalyses the reaction L-tyrosyl-[protein] + ATP = O-phospho-L-tyrosyl-[protein] + ADP + H(+). With respect to regulation, in its inactive state, the C-terminal tail interacts with the catalytic domain and inhibits the kinase activity. Upon ligand binding, the C-terminal tail is displaced and becomes phosphorylated, thus increasing the kinase activity. Functionally, receptor tyrosine kinase that transduces signals from the extracellular matrix into the cytoplasm by binding to hepatocyte growth factor/HGF ligand. Regulates many physiological processes including proliferation, scattering, morphogenesis and survival. Ligand binding at the cell surface induces autophosphorylation of MET on its intracellular domain that provides docking sites for downstream signaling molecules. Following activation by ligand, interacts with the PI3-kinase subunit PIK3R1, PLCG1, SRC, GRB2, STAT3 or the adapter GAB1. Recruitment of these downstream effectors by MET leads to the activation of several signaling cascades including the RAS-ERK, PI3 kinase-AKT, or PLCgamma-PKC. The RAS-ERK activation is associated with the morphogenetic effects while PI3K/AKT coordinates prosurvival effects. During embryonic development, MET signaling plays a role in gastrulation, development and migration of neuronal precursors, angiogenesis and kidney formation. During skeletal muscle development, it is crucial for the migration of muscle progenitor cells and for the proliferation of secondary myoblasts. In adults, participates in wound healing as well as organ regeneration and tissue remodeling. Also promotes differentiation and proliferation of hematopoietic cells. May regulate cortical bone osteogenesis. Its function is as follows. (Microbial infection) Acts as a receptor for Listeria monocytogenes internalin InlB, mediating entry of the pathogen into cells. The polypeptide is Hepatocyte growth factor receptor (Met) (Mus musculus (Mouse)).